The following is a 199-amino-acid chain: Probable septum site-determining protein MinC (199 aa).

It belongs to the MinC family. Interacts with MinD and FtsZ.

Functionally, cell division inhibitor that blocks the formation of polar Z ring septums. Rapidly oscillates between the poles of the cell to destabilize FtsZ filaments that have formed before they mature into polar Z rings. Prevents FtsZ polymerization. The protein is Probable septum site-determining protein MinC of Persephonella marina (strain DSM 14350 / EX-H1).